Here is a 126-residue protein sequence, read N- to C-terminus: Aspartate 1-decarboxylase (126 aa).

The active-site Schiff-base intermediate with substrate; via pyruvic acid is Ser25. The residue at position 25 (Ser25) is a Pyruvic acid (Ser). Thr57 contacts substrate. Tyr58 functions as the Proton donor in the catalytic mechanism. 73–75 (GAA) provides a ligand contact to substrate.

Belongs to the PanD family. Heterooctamer of four alpha and four beta subunits. The cofactor is pyruvate. In terms of processing, is synthesized initially as an inactive proenzyme, which is activated by self-cleavage at a specific serine bond to produce a beta-subunit with a hydroxyl group at its C-terminus and an alpha-subunit with a pyruvoyl group at its N-terminus.

It localises to the cytoplasm. The enzyme catalyses L-aspartate + H(+) = beta-alanine + CO2. The protein operates within cofactor biosynthesis; (R)-pantothenate biosynthesis; beta-alanine from L-aspartate: step 1/1. Functionally, catalyzes the pyruvoyl-dependent decarboxylation of aspartate to produce beta-alanine. The polypeptide is Aspartate 1-decarboxylase (Salmonella dublin (strain CT_02021853)).